Reading from the N-terminus, the 954-residue chain is Protein translocase subunit SecA (954 aa).

ATP is bound by residues Gln86, 104–108, and Asp494; that span reads GEGKT. Residues 520-549 are disordered; sequence LDPDNPLGSASTTSRGGGQGFGPASPKPKK.

It belongs to the SecA family. In terms of assembly, monomer and homodimer. Part of the essential Sec protein translocation apparatus which comprises SecA, SecYEG and auxiliary proteins SecDF. Other proteins may also be involved.

Its subcellular location is the cell inner membrane. The protein localises to the cellular thylakoid membrane. The protein resides in the cytoplasm. The enzyme catalyses ATP + H2O + cellular proteinSide 1 = ADP + phosphate + cellular proteinSide 2.. Functionally, part of the Sec protein translocase complex. Interacts with the SecYEG preprotein conducting channel. Has a central role in coupling the hydrolysis of ATP to the transfer of proteins into and across the cell membrane, serving as an ATP-driven molecular motor driving the stepwise translocation of polypeptide chains across the membrane. Its function is as follows. Probably participates in protein translocation into and across both the cytoplasmic and thylakoid membranes in cyanobacterial cells. The chain is Protein translocase subunit SecA from Synechococcus sp. (strain JA-3-3Ab) (Cyanobacteria bacterium Yellowstone A-Prime).